The chain runs to 226 residues: PKHD-type hydroxylase Plav_0377 (226 aa).

One can recognise a Fe2OG dioxygenase domain in the interval Lys78–Ser178. Residues His96, Asp98, and His159 each coordinate Fe cation. Residue Arg169 participates in 2-oxoglutarate binding.

It depends on Fe(2+) as a cofactor. The cofactor is L-ascorbate.

This Parvibaculum lavamentivorans (strain DS-1 / DSM 13023 / NCIMB 13966) protein is PKHD-type hydroxylase Plav_0377.